Consider the following 395-residue polypeptide: Phosphoglycerate kinase (395 aa).

Substrate is bound by residues 21–23 (DLN), arginine 36, 59–62 (HLGR), arginine 113, and arginine 146. ATP-binding positions include lysine 197, glutamate 324, and 350–353 (GGDT).

Belongs to the phosphoglycerate kinase family. Monomer.

The protein resides in the cytoplasm. The enzyme catalyses (2R)-3-phosphoglycerate + ATP = (2R)-3-phospho-glyceroyl phosphate + ADP. It functions in the pathway carbohydrate degradation; glycolysis; pyruvate from D-glyceraldehyde 3-phosphate: step 2/5. The chain is Phosphoglycerate kinase from Acinetobacter baylyi (strain ATCC 33305 / BD413 / ADP1).